The chain runs to 492 residues: 3-octaprenyl-4-hydroxybenzoate carboxy-lyase (492 aa).

Asn175 provides a ligand contact to Mn(2+). Prenylated FMN contacts are provided by residues 178 to 180 (IYR), 192 to 194 (RWL), and 197 to 198 (RG). Glu241 provides a ligand contact to Mn(2+). The active-site Proton donor is the Asp290.

Belongs to the UbiD family. In terms of assembly, homohexamer. The cofactor is prenylated FMN. Requires Mn(2+) as cofactor.

The protein localises to the cell membrane. It carries out the reaction a 4-hydroxy-3-(all-trans-polyprenyl)benzoate + H(+) = a 2-(all-trans-polyprenyl)phenol + CO2. The protein operates within cofactor biosynthesis; ubiquinone biosynthesis. Catalyzes the decarboxylation of 3-octaprenyl-4-hydroxy benzoate to 2-octaprenylphenol, an intermediate step in ubiquinone biosynthesis. The polypeptide is 3-octaprenyl-4-hydroxybenzoate carboxy-lyase (Salmonella typhi).